A 396-amino-acid chain; its full sequence is L-lactate dehydrogenase (396 aa).

One can recognise an FMN hydroxy acid dehydrogenase domain in the interval 1–380; that stretch reads MIISAASDYR…TQDSLVQGLG (380 aa). Residue Tyr24 coordinates substrate. Residues Ser106 and Gln127 each contribute to the FMN site. Residue Tyr129 participates in substrate binding. An FMN-binding site is contributed by Thr155. Substrate is bound at residue Arg164. Lys251 serves as a coordination point for FMN. His275 serves as the catalytic Proton acceptor. A substrate-binding site is contributed by Arg278. 306 to 330 is an FMN binding site; sequence DSGIRNGLDVVRMIALGADTVLLGR.

The protein belongs to the FMN-dependent alpha-hydroxy acid dehydrogenase family. Requires FMN as cofactor.

It localises to the cell inner membrane. It carries out the reaction (S)-lactate + A = pyruvate + AH2. Its function is as follows. Catalyzes the conversion of L-lactate to pyruvate. Is coupled to the respiratory chain. This is L-lactate dehydrogenase from Shigella boydii serotype 18 (strain CDC 3083-94 / BS512).